Consider the following 380-residue polypeptide: MMKKYSLTTHSTETCQILFTSVSNVFKYIPSGTRRILIMYQDSVSQVLPIFSAASGVQCYRYLIPDSESAKQLGVAEQCWRFLAQNNFTRSDLIVSCGGGAASDLSGFVASSYLRGIKIIHIPTTLIGMVDAAIGGKTGINLKEGKNLVGSFYSPYIVLCDPSMLTTLNEEHLKSGLAEIIKCGFIQDESILSILEHNAQDHMDCSQRVCAETLPPKLLEELIHKAVSVKITMVDSDFRDTHKRQFLNYGHTLAHALEAATSHKLSHGQAVSIGMVYAAQVAFAKGLIGRNILTRHERILETYGLPVCPPEVQWRNITPYMQRDKKNMQNNDTDSYKDSREIPQISTQSKLVLLRDIANPFITSVSHTVLLEAYEAMFPQ.

Residues 100-104, 124-125, lysine 137, and lysine 146 contribute to the NAD(+) site; these read GAASD and TT. Zn(2+) is bound by residues glutamate 179, histidine 251, and histidine 267.

The protein belongs to the sugar phosphate cyclases superfamily. Dehydroquinate synthase family. NAD(+) serves as cofactor. The cofactor is Co(2+). It depends on Zn(2+) as a cofactor.

It localises to the cytoplasm. The enzyme catalyses 7-phospho-2-dehydro-3-deoxy-D-arabino-heptonate = 3-dehydroquinate + phosphate. It participates in metabolic intermediate biosynthesis; chorismate biosynthesis; chorismate from D-erythrose 4-phosphate and phosphoenolpyruvate: step 2/7. Its function is as follows. Catalyzes the conversion of 3-deoxy-D-arabino-heptulosonate 7-phosphate (DAHP) to dehydroquinate (DHQ). The protein is 3-dehydroquinate synthase of Tropheryma whipplei (strain TW08/27) (Whipple's bacillus).